Consider the following 621-residue polypeptide: Glutathione-regulated potassium-efflux system protein KefC (621 aa).

The next 12 membrane-spanning stretches (helical) occupy residues 9–29 (ALIY…LGLG), 30–50 (SVLG…RLVN), 54–74 (AILH…GLEL), 90–110 (GALQ…LLGL), 114–134 (VAEL…MQAM), 149–169 (FAVL…IPLL), 178–198 (LMAF…VVVL), 232–252 (LLLE…GVLL), 270–290 (GLLL…APWS), 296–316 (IVIL…LIAQ), 326–346 (RWFA…FGPA), and 359–379 (ALTL…VLLT). One can recognise an RCK N-terminal domain in the interval 399-518 (QPRVIVAGFG…AGVEAPERET (120 aa)). The interval 598–621 (GWQGTEEGRHTGDIADEPENKPSA) is disordered.

This sequence belongs to the monovalent cation:proton antiporter 2 (CPA2) transporter (TC 2.A.37) family. KefC subfamily. Homodimer. Interacts with the regulatory subunit KefF.

It localises to the cell inner membrane. Its function is as follows. Pore-forming subunit of a potassium efflux system that confers protection against electrophiles. Catalyzes K(+)/H(+) antiport. This chain is Glutathione-regulated potassium-efflux system protein KefC, found in Klebsiella aerogenes (Enterobacter aerogenes).